Here is a 107-residue protein sequence, read N- to C-terminus: Nucleoid-associated protein BMEA_A0033 (107 aa).

The protein belongs to the YbaB/EbfC family. As to quaternary structure, homodimer.

It localises to the cytoplasm. The protein localises to the nucleoid. Binds to DNA and alters its conformation. May be involved in regulation of gene expression, nucleoid organization and DNA protection. In Brucella melitensis biotype 2 (strain ATCC 23457), this protein is Nucleoid-associated protein BMEA_A0033.